The chain runs to 218 residues: Mitochondrial fission factor (218 aa).

Over 1-198 (MAEISRIQYE…ENKERAKREM (198 aa)) the chain is Cytoplasmic. At Thr-89 the chain carries Phosphothreonine. A phosphoserine mark is found at Ser-129, Ser-131, Ser-146, and Ser-171. Residues 167–198 (VDAASLRRQIIKLNRRLQLLEEENKERAKREM) are a coiled coil. A helical; Anchor for type IV membrane protein membrane pass occupies residues 199 to 216 (VMYSITVAFWLLNSWLWF). Residues 217 to 218 (RR) are Mitochondrial intermembrane-facing.

Belongs to the Tango11 family. Homodimer. Interacts with DNM1L. Interacts with C11orf65/MFI; the interaction inhibits MFF interaction with DNM1L.

The protein localises to the mitochondrion outer membrane. It localises to the peroxisome. The protein resides in the cytoplasmic vesicle. Its subcellular location is the secretory vesicle. It is found in the synaptic vesicle. Its function is as follows. Plays a role in mitochondrial and peroxisomal fission. Promotes the recruitment and association of the fission mediator dynamin-related protein 1 (DNM1L) to the mitochondrial surface. May be involved in regulation of synaptic vesicle membrane dynamics by recruitment of DNM1L to clathrin-containing vesicles. In Bos taurus (Bovine), this protein is Mitochondrial fission factor (MFF).